We begin with the raw amino-acid sequence, 645 residues long: ATP-dependent zinc metalloprotease FtsH 3 (645 aa).

Over 1–11 (MQNKRNQSRVL) the chain is Cytoplasmic. Residues 12–32 (WLLLIYITIGIFIYVGVNSLI) traverse the membrane as a helical segment. Residues 33–110 (GTPDVSKIEY…YVRSLENSWW (78 aa)) lie on the Periplasmic side of the membrane. The helical transmembrane segment at 111-131 (ISILTFLLPVFLLIFLFTFLF) threads the bilayer. Topologically, residues 132-645 (RSSGGGANQG…ENNLIERKGI (514 aa)) are cytoplasmic. 202–209 (GEPGTGKT) is a binding site for ATP. His-424 lines the Zn(2+) pocket. Glu-425 is an active-site residue. Zn(2+) is bound by residues His-428 and Asp-501.

In the central section; belongs to the AAA ATPase family. It in the C-terminal section; belongs to the peptidase M41 family. In terms of assembly, homohexamer. Zn(2+) is required as a cofactor.

The protein localises to the cell inner membrane. In terms of biological role, acts as a processive, ATP-dependent zinc metallopeptidase for both cytoplasmic and membrane proteins. Plays a role in the quality control of integral membrane proteins. This chain is ATP-dependent zinc metalloprotease FtsH 3, found in Petrotoga mobilis (strain DSM 10674 / SJ95).